The chain runs to 307 residues: 4-hydroxythreonine-4-phosphate dehydrogenase (307 aa).

Residues H126 and T127 each contribute to the substrate site. Positions 156, 195, and 251 each coordinate a divalent metal cation. Positions 259, 268, and 277 each coordinate substrate.

Belongs to the PdxA family. Homodimer. Requires Zn(2+) as cofactor. Mg(2+) is required as a cofactor. The cofactor is Co(2+).

The protein localises to the cytoplasm. It carries out the reaction 4-(phosphooxy)-L-threonine + NAD(+) = 3-amino-2-oxopropyl phosphate + CO2 + NADH. It participates in cofactor biosynthesis; pyridoxine 5'-phosphate biosynthesis; pyridoxine 5'-phosphate from D-erythrose 4-phosphate: step 4/5. In terms of biological role, catalyzes the NAD(P)-dependent oxidation of 4-(phosphooxy)-L-threonine (HTP) into 2-amino-3-oxo-4-(phosphooxy)butyric acid which spontaneously decarboxylates to form 3-amino-2-oxopropyl phosphate (AHAP). The chain is 4-hydroxythreonine-4-phosphate dehydrogenase from Helicobacter pylori (strain J99 / ATCC 700824) (Campylobacter pylori J99).